We begin with the raw amino-acid sequence, 65 residues long: Large ribosomal subunit protein bL35c (65 aa).

The segment covering 25–44 (HKASKSHLLQKKSSKQRRHL) has biased composition (basic residues). The interval 25 to 45 (HKASKSHLLQKKSSKQRRHLS) is disordered.

Belongs to the bacterial ribosomal protein bL35 family.

The protein localises to the plastid. Its subcellular location is the chloroplast. The chain is Large ribosomal subunit protein bL35c from Pyropia yezoensis (Susabi-nori).